Reading from the N-terminus, the 402-residue chain is Putative F-box protein At4g22180 (402 aa).

The 47-residue stretch at 18–64 (PNSWSELPLDLLTAVFERLSYANFQRAKSVCSSWHSGSRQSVPIQIP) folds into the F-box domain.

The polypeptide is Putative F-box protein At4g22180 (Arabidopsis thaliana (Mouse-ear cress)).